Here is a 249-residue protein sequence, read N- to C-terminus: Short-chain dehydrogenase virB (249 aa).

Residues isoleucine 16, arginine 104, tyrosine 150, lysine 154, valine 183, and threonine 185 each coordinate NADP(+). The active-site Proton donor is tyrosine 150. Catalysis depends on lysine 154, which acts as the Lowers pKa of active site Tyr.

The protein belongs to the short-chain dehydrogenases/reductases (SDR) family.

It participates in secondary metabolite biosynthesis. Short-chain dehydrogenase; part of the gene cluster that mediates the biosynthesis of virensols and trichoxide, fungal natural products that contain or are derived from a salicylaldehyde core. The pathway begins with the synthesis of the reduced chain in virensol C by the highly reducing polyketide synthase virA via condensation of one acetate and 8 malonate units. VirA has interesting programming rules since the first 2 ketides are fully reduced, the 3 following ketides undergo beta-dehydration, and the last 3 ketides are only reduced to beta-hydroxys to yield the trihydroxy portion. The production of aldehyde virensol C by virA alone is surprising, since virA does not contain a reductase (R) domain that is typically associated with reductive product release in HRPKS. The cupin-domain enzyme virC is involved in enhancing virA product turnover. The short-chain dehydrogenase virB then oxidizes the C-7 alcohol of virensol C to a ketone, yielding virensol D. Virensol D is further transformed to salicylaldehyde 5-deoxyaurocitrin by the short-chain dehydrogenase virD. VirD catalyzes the dehydrogenation of C-3 to form the beta-ketone aldehyde, which is followed by the generation of the nucleophilic C-2 that is required for the intramolecular aldol condensation between C-2 and C-7, itself followed by dehydration and aromatization which leads to salicylaldehyde 5-deoxyaurocitrin. While the dehydrogenation of virensol D is definitely catalyzed by virD, the aldol condensation and dehydration may be uncatalyzed or assisted by virD. The short chain dehydrogenase virG then converts salicylaldehyde 5-deoxyaurocitrin into virensol B which is further hydroxylated by the cytochrome P450 monooxygenase virE to yield the hydroquinone virensol A. VirI then may oxidize virensol A to form the quinone, while virH performs the epoxidation. Finally, the two remaining short-chain dehydrogenases, virK and virL, are probably responsible for reducing the ketones to the corresponding alcohols to furnish the epoxycyclohexanol structure in trichoxide. This chain is Short-chain dehydrogenase virB, found in Hypocrea virens (strain Gv29-8 / FGSC 10586) (Gliocladium virens).